The following is a 395-amino-acid chain: 1-deoxy-D-xylulose 5-phosphate reductoisomerase (395 aa).

Residues T15, G16, S17, I18, G41, N43, and N126 each coordinate NADPH. 1-deoxy-D-xylulose 5-phosphate is bound at residue K127. E128 is an NADPH binding site. Residue D152 coordinates Mn(2+). Residues S153, E154, S178, and H201 each coordinate 1-deoxy-D-xylulose 5-phosphate. E154 is a Mn(2+) binding site. G207 is a binding site for NADPH. 1-deoxy-D-xylulose 5-phosphate contacts are provided by S214, N219, K220, and E223. E223 contributes to the Mn(2+) binding site.

It belongs to the DXR family. It depends on Mg(2+) as a cofactor. Requires Mn(2+) as cofactor.

The enzyme catalyses 2-C-methyl-D-erythritol 4-phosphate + NADP(+) = 1-deoxy-D-xylulose 5-phosphate + NADPH + H(+). It participates in isoprenoid biosynthesis; isopentenyl diphosphate biosynthesis via DXP pathway; isopentenyl diphosphate from 1-deoxy-D-xylulose 5-phosphate: step 1/6. Catalyzes the NADPH-dependent rearrangement and reduction of 1-deoxy-D-xylulose-5-phosphate (DXP) to 2-C-methyl-D-erythritol 4-phosphate (MEP). In Ruegeria sp. (strain TM1040) (Silicibacter sp.), this protein is 1-deoxy-D-xylulose 5-phosphate reductoisomerase.